The primary structure comprises 154 residues: uncharacterized protein (154 aa).

4 helical membrane-spanning segments follow: residues 15–37 (DFSF…ALIT), 58–80 (FAAM…WLWG), 95–116 (LGAL…FAFT), and 123–145 (LVIS…FVPH).

It localises to the cell membrane. This is an uncharacterized protein from Archaeoglobus fulgidus (strain ATCC 49558 / DSM 4304 / JCM 9628 / NBRC 100126 / VC-16).